We begin with the raw amino-acid sequence, 431 residues long: Serine hydroxymethyltransferase (431 aa).

(6S)-5,6,7,8-tetrahydrofolate-binding positions include L128 and 132 to 134; that span reads GHL. K237 carries the N6-(pyridoxal phosphate)lysine modification. E253 is a (6S)-5,6,7,8-tetrahydrofolate binding site.

This sequence belongs to the SHMT family. Homodimer. The cofactor is pyridoxal 5'-phosphate.

The protein localises to the cytoplasm. It catalyses the reaction (6R)-5,10-methylene-5,6,7,8-tetrahydrofolate + glycine + H2O = (6S)-5,6,7,8-tetrahydrofolate + L-serine. It participates in one-carbon metabolism; tetrahydrofolate interconversion. The protein operates within amino-acid biosynthesis; glycine biosynthesis; glycine from L-serine: step 1/1. In terms of biological role, catalyzes the reversible interconversion of serine and glycine with tetrahydrofolate (THF) serving as the one-carbon carrier. This reaction serves as the major source of one-carbon groups required for the biosynthesis of purines, thymidylate, methionine, and other important biomolecules. Also exhibits THF-independent aldolase activity toward beta-hydroxyamino acids, producing glycine and aldehydes, via a retro-aldol mechanism. This chain is Serine hydroxymethyltransferase, found in Cereibacter sphaeroides (strain ATCC 17023 / DSM 158 / JCM 6121 / CCUG 31486 / LMG 2827 / NBRC 12203 / NCIMB 8253 / ATH 2.4.1.) (Rhodobacter sphaeroides).